A 59-amino-acid polypeptide reads, in one-letter code: UPF0337 protein MM_2677 (59 aa).

Basic and acidic residues-rich tracts occupy residues 1 to 24 and 33 to 59; these read MKEG…KESA and MEAK…EFEK. Residues 1 to 59 are disordered; the sequence is MKEGTKEEMEGKFSKAKGEIKESAGEMTGDIEMEAKGEAEKRKGEAQEKVGKIRKEFEK.

It belongs to the UPF0337 (CsbD) family.

This chain is UPF0337 protein MM_2677, found in Methanosarcina mazei (strain ATCC BAA-159 / DSM 3647 / Goe1 / Go1 / JCM 11833 / OCM 88) (Methanosarcina frisia).